A 465-amino-acid chain; its full sequence is Putative subtilisin-like proteinase 1 (465 aa).

The N-terminal stretch at Met1–Ser17 is a signal peptide. Residues Tyr19–Val90 form the Inhibitor I9 domain. A Peptidase S8 domain is found at Pro115–Lys447. Residues Asp148 and His180 each act as charge relay system in the active site. An intrachain disulfide couples Cys329 to Cys360. Ser386 acts as the Charge relay system in catalysis.

It belongs to the peptidase S8 family.

The protein resides in the secreted. The protein localises to the extracellular space. In terms of biological role, may be involved in the degradation of proteins for nutrient acquisition or possess a regulatory function by proteolytic activation of proproteins. This Encephalitozoon cuniculi (strain GB-M1) (Microsporidian parasite) protein is Putative subtilisin-like proteinase 1 (SPL1).